Here is a 102-residue protein sequence, read N- to C-terminus: Protamine-2 (102 aa).

Disordered regions lie at residues 1-40 and 67-102; these read MVRYRVRSPSEPSHEVYRQQLHGQEQGHHGQEEQGLSPEH and HRQQHRSCRRRKRRSCRHRRKHRRGCRTRRRTCRRH. A phosphoserine mark is found at S8, S10, and S37.

Belongs to the protamine P2 family. Interacts with TDRP. Proteolytic processing into mature chains is required for histone eviction during spermatogenesis. Transition proteins (TNP1 and TNP2) are required for processing. As to expression, testis.

The protein resides in the nucleus. The protein localises to the chromosome. Protamines substitute for histones in the chromatin of sperm during the haploid phase of spermatogenesis. They compact sperm DNA into a highly condensed, stable and inactive complex. This chain is Protamine-2 (PRM2), found in Pan troglodytes (Chimpanzee).